A 263-amino-acid chain; its full sequence is Probable elongation factor 1-beta/1-delta 2 (263 aa).

Serine 2 bears the N-acetylserine mark. A disordered region spans residues 112-153 (QGQTSSVAAPAAAPAAAKEEAAGDDDFDLFGSEDEEEDEEKK). Residues 133 to 150 (AGDDDFDLFGSEDEEEDE) are compositionally biased toward acidic residues.

The protein belongs to the EF-1-beta/EF-1-delta family. As to quaternary structure, EF-1 is composed of 4 subunits: alpha, beta, delta, and gamma.

Functionally, EF-1-beta and EF-1-delta stimulate the exchange of GDP bound to EF-1-alpha to GTP. The protein is Probable elongation factor 1-beta/1-delta 2 of Caenorhabditis elegans.